The chain runs to 431 residues: NADH-quinone oxidoreductase subunit D 2 (431 aa).

The segment at 1–27 (MNDHKGLGGLDTEATPGSFGAGEPPRA) is disordered.

Belongs to the complex I 49 kDa subunit family. NDH-1 is composed of 14 different subunits. Subunits NuoB, C, D, E, F, and G constitute the peripheral sector of the complex.

Its subcellular location is the cell inner membrane. The catalysed reaction is a quinone + NADH + 5 H(+)(in) = a quinol + NAD(+) + 4 H(+)(out). In terms of biological role, NDH-1 shuttles electrons from NADH, via FMN and iron-sulfur (Fe-S) centers, to quinones in the respiratory chain. The immediate electron acceptor for the enzyme in this species is believed to be ubiquinone. Couples the redox reaction to proton translocation (for every two electrons transferred, four hydrogen ions are translocated across the cytoplasmic membrane), and thus conserves the redox energy in a proton gradient. This chain is NADH-quinone oxidoreductase subunit D 2, found in Anaeromyxobacter sp. (strain Fw109-5).